Consider the following 264-residue polypeptide: Acetylglutamate kinase (264 aa).

Residues 50 to 51 (GG), Arg-72, and Asn-164 each bind substrate.

This sequence belongs to the acetylglutamate kinase family. ArgB subfamily.

The protein resides in the cytoplasm. The catalysed reaction is N-acetyl-L-glutamate + ATP = N-acetyl-L-glutamyl 5-phosphate + ADP. Its pathway is amino-acid biosynthesis; L-arginine biosynthesis; N(2)-acetyl-L-ornithine from L-glutamate: step 2/4. Catalyzes the ATP-dependent phosphorylation of N-acetyl-L-glutamate. The protein is Acetylglutamate kinase of Moritella profunda.